We begin with the raw amino-acid sequence, 1829 residues long: Iron-regulated protein FrpC (1829 aa).

Hemolysin-type calcium-binding repeat units follow at residues 869 to 886 (FGHNKNVSLYGNDGNDTL), 887 to 904 (IGGAGNDYLEGGSGSDTY), 1015 to 1032 (NGGLGDDYLYGADGDDLL), 1033 to 1050 (NGDAGNDSIYSGNGNDTL), 1051 to 1068 (DGGEGNDALYGYNGNDAL), 1069 to 1086 (NGGEGNDHLNGEDGNDTL), 1087 to 1104 (IGGAGNDYLEGGSGSDTY), 1215 to 1232 (NGGLGDDYLYGADGDDLL), 1233 to 1250 (NGDAGNDSIYSGNGNDTL), 1251 to 1268 (DGGEGNDALYGYNGNDAL), 1269 to 1286 (NGGEGNDHLNGEDGNDTL), 1287 to 1304 (IGGAGNDYLEGGSGSDTY), 1415 to 1432 (NGGLGDDYLYGADGDDLL), 1433 to 1450 (NGDAGNDSIYSGNGNDTL), 1451 to 1468 (NGGEGNDALYGYNGNDAL), 1469 to 1486 (NGGEGNDHLNGEDGNDTL), 1487 to 1504 (IGGAGNDYLEGGSGSDTY), 1615 to 1632 (NGGLGDDYLYGADGDDLL), 1633 to 1650 (NGDAGNDSIYSGNGNDTL), 1651 to 1668 (DGGEGNDALYGYNGNDAL), 1669 to 1686 (NGGEGNDHLNGEDGNDTL), and 1687 to 1704 (IGGAGNDYLEGGSGSDTY). The tract at residues 1671–1690 (GEGNDHLNGEDGNDTLIGGA) is disordered.

This sequence belongs to the RTX prokaryotic toxin (TC 1.C.11) family.

It is found in the cell outer membrane. Its subcellular location is the secreted. May participate in the pathogenesis of meningococcal disease. The polypeptide is Iron-regulated protein FrpC (frpC) (Neisseria meningitidis serogroup B (strain ATCC BAA-335 / MC58)).